Reading from the N-terminus, the 94-residue chain is Integration host factor subunit beta (94 aa).

Belongs to the bacterial histone-like protein family. As to quaternary structure, heterodimer of an alpha and a beta chain.

Functionally, this protein is one of the two subunits of integration host factor, a specific DNA-binding protein that functions in genetic recombination as well as in transcriptional and translational control. This chain is Integration host factor subunit beta, found in Actinobacillus succinogenes (strain ATCC 55618 / DSM 22257 / CCUG 43843 / 130Z).